A 444-amino-acid polypeptide reads, in one-letter code: tRNA (guanine-N(7)-)-methyltransferase non-catalytic subunit TRM82 (444 aa).

7 WD repeats span residues 1-47, 48-99, 100-147, 148-192, 193-237, 238-279, and 308-354; these read MSVI…WSDD, FDKI…LGAP, PIYS…KRFC, FSKR…EPIL, GHVS…DKWL, FGHK…STFD, and FAVS…ITFP. The segment at 55–92 is disordered; that stretch reads RNTTAKEQQGQSSENENENKKLKSNKGDSIKRTAAKVP. Basic and acidic residues predominate over residues 71–85; it reads NENKKLKSNKGDSIK. Position 93 is a phosphoserine (serine 93).

It belongs to the WD repeat TRM82 family. In terms of assembly, forms a heterodimer with the catalytic subunit TRM8.

The protein resides in the nucleus. It functions in the pathway tRNA modification; N(7)-methylguanine-tRNA biosynthesis. In terms of biological role, required for the formation of N(7)-methylguanine at position 46 (m7G46) in tRNA, a modification required to maintain stability of tRNAs; its absence resulting in tRNA decay. In the complex, it is required to stabilize and induce conformational changes of the catalytic subunit. The sequence is that of tRNA (guanine-N(7)-)-methyltransferase non-catalytic subunit TRM82 from Saccharomyces cerevisiae (strain RM11-1a) (Baker's yeast).